Consider the following 341-residue polypeptide: Paired box protein Pax-9 (341 aa).

The paired DNA-binding region spans 4–130; it reads AFGEVNQLGG…SSISRILRNK (127 aa). The tract at residues 7–63 is PAI subdomain; it reads EVNQLGGVFVNGRPLPNAIRLRIVELAQLGIRPCDISRQLRVSHGCVSKILARYNET. An RED subdomain region spans residues 82 to 130; that stretch reads TVVKHIRTYKQRDPGIFAWEIRDRLLADGVCDKYNVPSVSSISRILRNK. Residues 168-189 are interaction with KDM5B; it reads AAAAKVPTPPGVPAIPGSVAMP.

As to quaternary structure, interacts with KDM5B.

Its subcellular location is the nucleus. In terms of biological role, transcription factor required for normal development of thymus, parathyroid glands, ultimobranchial bodies, teeth, skeletal elements of skull and larynx as well as distal limbs. This Daubentonia madagascariensis (Aye-aye) protein is Paired box protein Pax-9 (PAX9).